The primary structure comprises 78 residues: Sec-independent protein translocase protein TatA (78 aa).

Residues 1 to 21 traverse the membrane as a helical segment; sequence MFGRIGLPEILLILAIALIIF. Positions 50-78 are disordered; sequence EVNEVEEEVKENKSSDVKENEDNKTEKST. Over residues 59 to 78 the composition is skewed to basic and acidic residues; sequence KENKSSDVKENEDNKTEKST.

This sequence belongs to the TatA/E family. In terms of assembly, forms a complex with TatC.

The protein localises to the cell membrane. Its function is as follows. Part of the twin-arginine translocation (Tat) system that transports large folded proteins containing a characteristic twin-arginine motif in their signal peptide across membranes. TatA could form the protein-conducting channel of the Tat system. The chain is Sec-independent protein translocase protein TatA from Natranaerobius thermophilus (strain ATCC BAA-1301 / DSM 18059 / JW/NM-WN-LF).